A 212-amino-acid chain; its full sequence is Large ribosomal subunit protein uL3 (212 aa).

A disordered region spans residues 135-156 (MTHGNSRSHRVPGSIGQNQSPG). N5-methylglutamine is present on Gln-153.

The protein belongs to the universal ribosomal protein uL3 family. Part of the 50S ribosomal subunit. Forms a cluster with proteins L14 and L19. In terms of processing, methylated by PrmB.

One of the primary rRNA binding proteins, it binds directly near the 3'-end of the 23S rRNA, where it nucleates assembly of the 50S subunit. This chain is Large ribosomal subunit protein uL3, found in Tolumonas auensis (strain DSM 9187 / NBRC 110442 / TA 4).